The primary structure comprises 257 residues: UPF0246 protein Rsph17029_0026 (257 aa).

It belongs to the UPF0246 family.

This chain is UPF0246 protein Rsph17029_0026, found in Cereibacter sphaeroides (strain ATCC 17029 / ATH 2.4.9) (Rhodobacter sphaeroides).